Reading from the N-terminus, the 422-residue chain is Zinc finger protein zfp-2 (422 aa).

A disordered region spans residues Ala95 to Val119. The span at Thr99 to Ser113 shows a compositional bias: low complexity. 7 consecutive C2H2-type zinc fingers follow at residues Tyr171–His194, Phe200–His222, Phe229–His251, Ser255–His278, Tyr300–His322, Tyr328–His350, and Tyr356–His379.

Expressed in vulval cells and all somatic gonad structures such as spermatheca, sheath cells, uterine cells and distal tip cells.

It is found in the nucleus. Functionally, probable zinc finger transcription factor that acts as a transcriptional repressor. Acts redundantly with the transcriptional repressor lin-35 to control the development of somatic gonad lineages. May, in addition, suppress sensitivity to RNAi. This chain is Zinc finger protein zfp-2, found in Caenorhabditis elegans.